The chain runs to 103 residues: Protein Rev (103 aa).

Position 5 is a phosphoserine; by host CK2 (Ser-5). The homomultimerization stretch occupies residues 17 to 25 (IIKILYQSN). Disordered stretches follow at residues 24-49 (SNPCPTPAGSRNARKNRRRRWRRRQA) and 82-103 (IRDPEADRLPGTGTVDPGTKDN). The Nuclear localization signal and RNA-binding (RRE) signature appears at 33–49 (SRNARKNRRRRWRRRQA). Basic residues predominate over residues 35-48 (NARKNRRRRWRRRQ). A Nuclear export signal and binding to XPO1 motif is present at residues 72–83 (VDLPPLEQLNIR).

It belongs to the HIV-1 REV protein family. As to quaternary structure, homomultimer; when bound to the RRE. Multimeric assembly is essential for activity and may involve XPO1. Binds to human KPNB1, XPO1, TNPO1, RANBP5 and IPO7. Interacts with the viral Integrase. Interacts with human KHDRBS1. Interacts with human NAP1; this interaction decreases Rev multimerization and stimulates its activity. Interacts with human DEAD-box helicases DDX3 and DDX24; these interactions may serve for viral RNA export to the cytoplasm and packaging, respectively. Interacts with human PSIP1; this interaction may inhibit HIV-1 DNA integration by promoting dissociation of the Integrase-LEDGF/p75 complex. In terms of processing, asymmetrically arginine dimethylated at one site by host PRMT6. Methylation impairs the RNA-binding activity and export of viral RNA from the nucleus to the cytoplasm. Phosphorylated by protein kinase CK2. Presence of, and maybe binding to the N-terminus of the regulatory beta subunit of CK2 is necessary for CK2-mediated Rev's phosphorylation.

It localises to the host nucleus. The protein resides in the host nucleolus. Its subcellular location is the host cytoplasm. Functionally, escorts unspliced or incompletely spliced viral pre-mRNAs (late transcripts) out of the nucleus of infected cells. These pre-mRNAs carry a recognition sequence called Rev responsive element (RRE) located in the env gene, that is not present in fully spliced viral mRNAs (early transcripts). This function is essential since most viral proteins are translated from unspliced or partially spliced pre-mRNAs which cannot exit the nucleus by the pathway used by fully processed cellular mRNAs. Rev itself is translated from a fully spliced mRNA that readily exits the nucleus. Rev's nuclear localization signal (NLS) binds directly to KPNB1/Importin beta-1 without previous binding to KPNA1/Importin alpha-1. KPNB1 binds to the GDP bound form of RAN (Ran-GDP) and targets Rev to the nucleus. In the nucleus, the conversion from Ran-GDP to Ran-GTP dissociates Rev from KPNB1 and allows Rev's binding to the RRE in viral pre-mRNAs. Rev multimerization on the RRE via cooperative assembly exposes its nuclear export signal (NES) to the surface. Rev can then form a complex with XPO1/CRM1 and Ran-GTP, leading to nuclear export of the complex. Conversion from Ran-GTP to Ran-GDP mediates dissociation of the Rev/RRE/XPO1/RAN complex, so that Rev can return to the nucleus for a subsequent round of export. Beside KPNB1, also seems to interact with TNPO1/Transportin-1, RANBP5/IPO5 and IPO7/RANBP7 for nuclear import. The nucleoporin-like HRB/RIP is an essential cofactor that probably indirectly interacts with Rev to release HIV RNAs from the perinuclear region to the cytoplasm. This Human immunodeficiency virus type 1 group O (isolate MVP5180) (HIV-1) protein is Protein Rev.